We begin with the raw amino-acid sequence, 405 residues long: Probable succinyl-diaminopimelate desuccinylase (405 aa).

His-72 serves as a coordination point for Zn(2+). The active site involves Asp-74. Zn(2+) is bound at residue Asp-105. The active-site Proton acceptor is Glu-139. Zn(2+) is bound by residues Glu-140, Glu-165, and His-377.

The protein belongs to the peptidase M20A family. The cofactor is Zn(2+). It depends on Co(2+) as a cofactor.

It carries out the reaction N-succinyl-(2S,6S)-2,6-diaminopimelate + H2O = (2S,6S)-2,6-diaminopimelate + succinate. The protein operates within amino-acid biosynthesis; L-lysine biosynthesis via DAP pathway; LL-2,6-diaminopimelate from (S)-tetrahydrodipicolinate (succinylase route): step 3/3. The polypeptide is Probable succinyl-diaminopimelate desuccinylase (dapE) (Staphylococcus epidermidis (strain ATCC 12228 / FDA PCI 1200)).